A 1499-amino-acid chain; its full sequence is Collagen alpha-2(V) chain (1499 aa).

An N-terminal signal peptide occupies residues 1-26 (MMANWAEARPLLILIVLLGQFVSIKA). The VWFC domain maps to 39–97 (IACTQNGQMYLNRDIWKPAPCQICVCDNGAILCDKIECQDVLDCADPVTPPGECCPVCS). Positions 104 to 1268 (NTNFGRGRKG…DDKNKTDPGV (1165 aa)) are disordered. Residues 170 to 182 (PGAPGPPGHPSHP) show a composition bias toward pro residues. Positions 212–227 (PGSVGPVGPRGPQGLQ) are enriched in low complexity. The span at 236–248 (TGPPGEPGDPGPM) shows a compositional bias: pro residues. A hydroxyproline mark is found at Pro-290, Pro-293, and Pro-296. Low complexity-rich tracts occupy residues 322–340 (EAGP…PRGM) and 427–443 (TPGA…SGPP). The short motif at 506–508 (RGD) is the Cell attachment site element. Composition is skewed to low complexity over residues 604–626 (SIGI…SGDP) and 694–709 (DQGV…PLGP). Pro-611 and Pro-617 each carry hydroxyproline. The segment covering 710 to 721 (RGERGNPGERGE) has biased composition (basic and acidic residues). The segment covering 732-741 (GMAGGHGPDG) has biased composition (gly residues). The segment covering 742–758 (PKGSPGPSGTPGDTGPP) has biased composition (low complexity). The span at 776–787 (KGDRGGIGEKGA) shows a compositional bias: basic and acidic residues. The span at 826 to 841 (PPGSRGNPGSRGENGP) shows a compositional bias: low complexity. Positions 894–903 (GLKGGRGTQG) are enriched in gly residues. Pro-919 carries the post-translational modification 3-hydroxyproline; partial. A compositionally biased stretch (pro residues) spans 919 to 929 (PPGPAGAPGPA). 6 short sequence motifs (cell attachment site) span residues 944–946 (RGD), 1067–1069 (RGD), 1070–1072 (RGD), 1100–1102 (RGD), 1127–1129 (RGD), and 1136–1138 (RGD). Residues 1063–1072 (AVGERGDRGD) are compositionally biased toward basic and acidic residues. A compositionally biased stretch (low complexity) spans 1093–1114 (APGDAGQRGDPGSRGPIGPPGR). Residues 1127–1141 (RGDKGDHGDRGDRGQ) show a composition bias toward basic and acidic residues. A 3-hydroxyproline; partial modification is found at Pro-1156. 2 stretches are compositionally biased toward pro residues: residues 1171 to 1181 (PFGPRGPPGPV) and 1211 to 1226 (EGPP…PGPP). Residues 1230 to 1499 (TAALGDIMGH…GVEIGPVCFV (270 aa)) constitute a propeptide, C-terminal propeptide. Residue Asn-1262 is glycosylated (N-linked (GlcNAc...) asparagine). Residues 1266–1499 (PGVHATLKSL…GVEIGPVCFV (234 aa)) form the Fibrillar collagen NC1 domain. Intrachain disulfides connect Cys-1296–Cys-1328, Cys-1336–Cys-1497, and Cys-1405–Cys-1450. Ca(2+) is bound by residues Asp-1314, Asn-1316, Gln-1317, and Asp-1322. Asn-1400 carries an N-linked (GlcNAc...) asparagine glycan.

Belongs to the fibrillar collagen family. As to quaternary structure, trimers of two alpha 1(V) and one alpha 2(V) chains in most tissues and trimers of one alpha 1(V), one alpha 2(V), and one alpha 3(V) chains in placenta. Prolines at the third position of the tripeptide repeating unit (G-X-P) are hydroxylated in some or all of the chains. Probably 3-hydroxylated on Pro-919 and Pro-1156 by LEPREL1.

Its subcellular location is the secreted. The protein localises to the extracellular space. It localises to the extracellular matrix. In terms of biological role, type V collagen is a member of group I collagen (fibrillar forming collagen). It is a minor connective tissue component of nearly ubiquitous distribution. Type V collagen binds to DNA, heparan sulfate, thrombospondin, heparin, and insulin. Type V collagen is a key determinant in the assembly of tissue-specific matrices. The protein is Collagen alpha-2(V) chain (COL5A2) of Homo sapiens (Human).